The following is a 207-amino-acid chain: Elongation factor 1-beta (207 aa).

Alanine 2 bears the N-acetylalanine mark. The tract at residues phenylalanine 70 to glutamate 96 is disordered. Residues glutamate 80 to glutamate 96 show a composition bias toward acidic residues. Residue serine 90 is modified to Phosphoserine; by CK2.

Belongs to the EF-1-beta/EF-1-delta family. In terms of assembly, EF-1 is composed of 4 subunits: alpha, beta, delta, and gamma. In terms of processing, phosphorylation affects the GDP/GTP exchange rate.

In terms of biological role, EF-1-beta and EF-1-delta stimulate the exchange of GDP bound to EF-1-alpha to GTP. This Artemia salina (Brine shrimp) protein is Elongation factor 1-beta.